The primary structure comprises 572 residues: Fatty acid amide hydrolase 1 (572 aa).

The N-terminal stretch at M1–A14 is a signal peptide. Residues I32–I63 adopt a coiled-coil conformation. Active-site charge relay system residues include K139 and S214. Substrate-binding positions include S214 and V235 to S238. The active-site Acyl-ester intermediate is the S238.

The protein belongs to the amidase family. In terms of tissue distribution, expressed in the pharynx, some pharyngeal neurons, the posterior intestine and anal depressor muscles.

It carries out the reaction N-(5Z,8Z,11Z,14Z-eicosatetraenoyl)-ethanolamine + H2O = ethanolamine + (5Z,8Z,11Z,14Z)-eicosatetraenoate. It catalyses the reaction (9Z)-octadecenamide + H2O = (9Z)-octadecenoate + NH4(+). The enzyme catalyses (5Z,8Z,11Z,14Z,17Z-eicosapentaenoyl) ethanolamine + H2O = (5Z,8Z,11Z,14Z,17Z)-eicosapentaenoate + ethanolamine. The catalysed reaction is N-(9Z-hexadecenoyl) ethanolamine + H2O = (9Z)-hexadecenoate + ethanolamine. It carries out the reaction N-(9Z-octadecenoyl) ethanolamine + H2O = ethanolamine + (9Z)-octadecenoate. It catalyses the reaction N-octadecanoyl ethanolamine + H2O = octadecanoate + ethanolamine. The enzyme catalyses N-docosanoyl-ethanolamine + H2O = docosanoate + ethanolamine. The catalysed reaction is N-(15Z-tetracosenoyl)-ethanolamine + H2O = (15Z)-tetracosenoate + ethanolamine. It carries out the reaction N-hexadecanoylethanolamine + H2O = ethanolamine + hexadecanoate. It catalyses the reaction N-(9Z,12Z-octadecadienoyl)-ethanolamine + H2O = ethanolamine + (9Z,12Z)-octadecadienoate. The enzyme catalyses (9Z)-octadecenoate + glycine = N-(9Z-octadecenoyl)glycine + H2O. The catalysed reaction is N-(5Z,8Z,11Z,14Z)-eicosatetraenoyl-glycine + H2O = (5Z,8Z,11Z,14Z)-eicosatetraenoate + glycine. It carries out the reaction N-(5Z,8Z,11Z,14Z-eicosatetraenoyl)-L-serine + H2O = (5Z,8Z,11Z,14Z)-eicosatetraenoate + L-serine. Catalyzes the hydrolysis of endogenous amidated lipids like anandamide (AEA or N-(5Z,8Z,11Z,14Z-eicosatetraenoyl)-ethanolamine) and eicosapentaneoyl ethanolamide (EPEA or (5Z,8Z,11Z,14Z,17Z-eicosapentaenoyl) ethanolamine), as well as other fatty amides, to their corresponding fatty acids, thereby regulating the signaling functions of these molecules. EPEA promotes dauer formation and may constitute a signal of high nutrient availability. Breakdown of EPEA may promote lifespan extension when nutrient availability is high. Facilitates axon regeneration after injury by degradating inhibitory compounds such as AEA. FAAH cooperates with PM20D1 in the hydrolysis of amino acid-conjugated fatty acids such as N-fatty acyl glycine and N-fatty acyl-L-serine, thereby acting as a physiological regulator of specific subsets of intracellular, but not of extracellular, N-fatty acyl amino acids. In Caenorhabditis elegans, this protein is Fatty acid amide hydrolase 1.